The sequence spans 325 residues: Acetyl-coenzyme A carboxylase carboxyl transferase subunit alpha (325 aa).

The 258-residue stretch at 35-292 (EIEKLEARLT…DRVLRASLKQ (258 aa)) folds into the CoA carboxyltransferase C-terminal domain.

Belongs to the AccA family. As to quaternary structure, acetyl-CoA carboxylase is a heterohexamer composed of biotin carboxyl carrier protein (AccB), biotin carboxylase (AccC) and two subunits each of ACCase subunit alpha (AccA) and ACCase subunit beta (AccD).

It localises to the cytoplasm. It carries out the reaction N(6)-carboxybiotinyl-L-lysyl-[protein] + acetyl-CoA = N(6)-biotinyl-L-lysyl-[protein] + malonyl-CoA. The protein operates within lipid metabolism; malonyl-CoA biosynthesis; malonyl-CoA from acetyl-CoA: step 1/1. Component of the acetyl coenzyme A carboxylase (ACC) complex. First, biotin carboxylase catalyzes the carboxylation of biotin on its carrier protein (BCCP) and then the CO(2) group is transferred by the carboxyltransferase to acetyl-CoA to form malonyl-CoA. The polypeptide is Acetyl-coenzyme A carboxylase carboxyl transferase subunit alpha (Geobacillus thermodenitrificans (strain NG80-2)).